We begin with the raw amino-acid sequence, 325 residues long: Necdin (325 aa).

Disordered regions lie at residues 1–69 (MSEQ…IEDV) and 77–96 (AAEE…IPAP). In terms of domain architecture, MAGE spans 102-301 (LVQKAHELMW…QAWPSRYREA (200 aa)).

As to quaternary structure, binds to the transactivation domains of E2F1 and p53. Binds also SV40 large T antigen and adenovirus E1A. Interacts with nucleobindin 1 and 2. Brain specific. Not detected in other tissues. Expressed in postmitotic neurons. In adult brain the highest expression is in hypothalamus. Highly expressed in thalamus and midbrain. Relatively low levels are in cerebral cortex, hippocampus, striatum, olfactory bulb, cerebellum, pons and spinal cord. Also detected in neurally differentiated embryonal carcinoma cells.

It localises to the cytoplasm. It is found in the nucleus. The protein resides in the nucleoplasm. The protein localises to the nucleus matrix. In terms of biological role, growth suppressor that facilitates the entry of the cell into cell cycle arrest. Functionally similar to the retinoblastoma protein it binds to and represses the activity of cell-cycle-promoting proteins such as SV40 large T antigen, adenovirus E1A, and the transcription factor E2F. Necdin also interacts with p53 and works in an additive manner to inhibit cell growth. Also functions as a transcription factor and directly binds to specific guanosine-rich DNA sequences. The sequence is that of Necdin (Ndn) from Mus musculus (Mouse).